The primary structure comprises 660 residues: V-type ATP synthase subunit I (660 aa).

The next 7 helical transmembrane spans lie at 312-332 (FFAF…GLLF), 362-382 (ILGL…GMSF), 453-473 (FIDN…LSLG), 485-505 (IGWI…LGTV), 520-540 (GQIG…LAMI), 560-580 (VLSY…GATF), and 593-613 (SIVI…GGVI).

This sequence belongs to the V-ATPase 116 kDa subunit family.

Its subcellular location is the cell membrane. Functionally, produces ATP from ADP in the presence of a proton gradient across the membrane. This is V-type ATP synthase subunit I (atpI) from Chlamydia pneumoniae (Chlamydophila pneumoniae).